The sequence spans 182 residues: Ribosome-recycling factor (182 aa).

This sequence belongs to the RRF family.

It localises to the cytoplasm. In terms of biological role, responsible for the release of ribosomes from messenger RNA at the termination of protein biosynthesis. May increase the efficiency of translation by recycling ribosomes from one round of translation to another. This chain is Ribosome-recycling factor, found in Prochlorococcus marinus (strain AS9601).